The chain runs to 316 residues: Pantothenate kinase (316 aa).

Residue 95 to 102 participates in ATP binding; it reads GSVAVGKS.

It belongs to the prokaryotic pantothenate kinase family.

The protein localises to the cytoplasm. It catalyses the reaction (R)-pantothenate + ATP = (R)-4'-phosphopantothenate + ADP + H(+). The protein operates within cofactor biosynthesis; coenzyme A biosynthesis; CoA from (R)-pantothenate: step 1/5. The sequence is that of Pantothenate kinase (coaA) from Halalkalibacterium halodurans (strain ATCC BAA-125 / DSM 18197 / FERM 7344 / JCM 9153 / C-125) (Bacillus halodurans).